A 600-amino-acid polypeptide reads, in one-letter code: Phosphoenolpyruvate carboxykinase (ATP) (600 aa).

302-309 (GLSGTGKT) contacts ATP.

The protein belongs to the phosphoenolpyruvate carboxykinase (ATP) family.

It carries out the reaction oxaloacetate + ATP = phosphoenolpyruvate + ADP + CO2. Its pathway is carbohydrate biosynthesis; gluconeogenesis. This is Phosphoenolpyruvate carboxykinase (ATP) (acuF) from Emericella nidulans (strain FGSC A4 / ATCC 38163 / CBS 112.46 / NRRL 194 / M139) (Aspergillus nidulans).